The sequence spans 132 residues: Small ribosomal subunit protein uS8 (132 aa).

Belongs to the universal ribosomal protein uS8 family. In terms of assembly, part of the 30S ribosomal subunit. Contacts proteins S5 and S12.

In terms of biological role, one of the primary rRNA binding proteins, it binds directly to 16S rRNA central domain where it helps coordinate assembly of the platform of the 30S subunit. This is Small ribosomal subunit protein uS8 from Bacillus cytotoxicus (strain DSM 22905 / CIP 110041 / 391-98 / NVH 391-98).